Consider the following 125-residue polypeptide: Large ribosomal subunit protein uL18 (125 aa).

The protein belongs to the universal ribosomal protein uL18 family. Part of the 50S ribosomal subunit; part of the 5S rRNA/L5/L18/L25 subcomplex. Contacts the 5S and 23S rRNAs.

In terms of biological role, this is one of the proteins that bind and probably mediate the attachment of the 5S RNA into the large ribosomal subunit, where it forms part of the central protuberance. The sequence is that of Large ribosomal subunit protein uL18 from Anaplasma marginale (strain Florida).